Reading from the N-terminus, the 130-residue chain is Small ribosomal subunit protein uS11 (130 aa).

Residues 109–130 (EDITPIPHDGTGRPGGKRGRRV) form a disordered region.

Belongs to the universal ribosomal protein uS11 family. Part of the 30S ribosomal subunit.

Its function is as follows. Located on the platform of the 30S subunit. The protein is Small ribosomal subunit protein uS11 of Methanobrevibacter smithii (strain ATCC 35061 / DSM 861 / OCM 144 / PS).